Here is a 142-residue protein sequence, read N- to C-terminus: Transcriptional regulator MraZ (142 aa).

2 SpoVT-AbrB domains span residues 5–47 (EYQH…TINE) and 76–119 (ACIV…SREK).

This sequence belongs to the MraZ family. As to quaternary structure, forms oligomers.

Its subcellular location is the cytoplasm. It localises to the nucleoid. This is Transcriptional regulator MraZ from Clostridium botulinum (strain Alaska E43 / Type E3).